Consider the following 633-residue polypeptide: Probable extracellular metalloproteinase 3 (633 aa).

The signal sequence occupies residues Met-1–Ala-18. Positions His-19–Ser-246 are excised as a propeptide. N-linked (GlcNAc...) asparagine glycosylation is present at Asn-410. Zn(2+) is bound at residue His-429. Glu-430 is a catalytic residue. Residue His-433 participates in Zn(2+) binding. Residues Asn-480 and Asn-622 are each glycosylated (N-linked (GlcNAc...) asparagine).

It belongs to the peptidase M36 family. Zn(2+) serves as cofactor.

Its subcellular location is the secreted. Functionally, secreted metalloproteinase probably acting as a virulence factor. The chain is Probable extracellular metalloproteinase 3 (MEP3) from Trichophyton verrucosum (strain HKI 0517).